A 195-amino-acid chain; its full sequence is Phosphoheptose isomerase (195 aa).

Residues 36 to 195 (LAHCLLSDGK…DLVDHQLFGE (160 aa)) form the SIS domain. 51-53 (NGG) contacts substrate. Zn(2+)-binding residues include H60 and E64. Substrate is bound by residues E64, 93-94 (ND), 119-121 (STS), S124, and Q174. Residues Q174 and H182 each coordinate Zn(2+).

Belongs to the SIS family. GmhA subfamily. In terms of assembly, homotetramer. The cofactor is Zn(2+).

The protein resides in the cytoplasm. The catalysed reaction is 2 D-sedoheptulose 7-phosphate = D-glycero-alpha-D-manno-heptose 7-phosphate + D-glycero-beta-D-manno-heptose 7-phosphate. It participates in carbohydrate biosynthesis; D-glycero-D-manno-heptose 7-phosphate biosynthesis; D-glycero-alpha-D-manno-heptose 7-phosphate and D-glycero-beta-D-manno-heptose 7-phosphate from sedoheptulose 7-phosphate: step 1/1. In terms of biological role, catalyzes the isomerization of sedoheptulose 7-phosphate in D-glycero-D-manno-heptose 7-phosphate. This Methylococcus capsulatus (strain ATCC 33009 / NCIMB 11132 / Bath) protein is Phosphoheptose isomerase.